We begin with the raw amino-acid sequence, 415 residues long: Granaticin polyketide putative beta-ketoacyl synthase 2 (415 aa).

Residues 6-406 (RRRAVVTGLS…GFNSAVVVTL (401 aa)) enclose the Ketosynthase family 3 (KS3) domain.

This sequence belongs to the thiolase-like superfamily. Beta-ketoacyl-ACP synthases family.

Its pathway is antibiotic biosynthesis; granaticin biosynthesis. This chain is Granaticin polyketide putative beta-ketoacyl synthase 2 (gra-orf2), found in Streptomyces violaceoruber.